Reading from the N-terminus, the 247-residue chain is ATP synthase subunit a, chloroplastic (247 aa).

5 helical membrane-spanning segments follow: residues 38–58 (QVLI…IIAV), 95–115 (VPFI…GALL), 133–153 (DINT…YAGL), 199–219 (LVVV…VMFL), and 220–240 (GLFT…AYIG).

It belongs to the ATPase A chain family. As to quaternary structure, F-type ATPases have 2 components, CF(1) - the catalytic core - and CF(0) - the membrane proton channel. CF(1) has five subunits: alpha(3), beta(3), gamma(1), delta(1), epsilon(1). CF(0) has four main subunits: a, b, b' and c.

It localises to the plastid. The protein resides in the chloroplast thylakoid membrane. Functionally, key component of the proton channel; it plays a direct role in the translocation of protons across the membrane. This is ATP synthase subunit a, chloroplastic from Phalaenopsis aphrodite subsp. formosana (Moth orchid).